The sequence spans 46 residues: Elongation factor Tu (46 aa).

Basic and acidic residues predominate over residues 1-10 (MAKGKFERSK). The segment at 1–20 (MAKGKFERSKPHVNVGTIGH) is disordered. 19–26 (GHVDHGKT) is a GTP binding site.

This sequence belongs to the GTP-binding elongation factor family. EF-Tu/EF-1A subfamily. As to quaternary structure, monomer.

The protein localises to the cytoplasm. Its function is as follows. This protein promotes the GTP-dependent binding of aminoacyl-tRNA to the A-site of ribosomes during protein biosynthesis. The sequence is that of Elongation factor Tu (tufA) from Eikenella corrodens.